A 293-amino-acid chain; its full sequence is Probable endonuclease 4 (293 aa).

Zn(2+) contacts are provided by His-75, His-115, Glu-153, Asp-187, His-190, His-224, Asp-237, His-239, and Glu-269.

It belongs to the AP endonuclease 2 family. It depends on Zn(2+) as a cofactor.

The enzyme catalyses Endonucleolytic cleavage to 5'-phosphooligonucleotide end-products.. Its function is as follows. Endonuclease IV plays a role in DNA repair. It cleaves phosphodiester bonds at apurinic or apyrimidinic (AP) sites, generating a 3'-hydroxyl group and a 5'-terminal sugar phosphate. This is Probable endonuclease 4 from Chlamydia pneumoniae (Chlamydophila pneumoniae).